We begin with the raw amino-acid sequence, 505 residues long: TBC1 domain family member 22B (505 aa).

The residue at position 2 (Ala-2) is an N-acetylalanine. Ser-58 and Ser-116 each carry phosphoserine. Positions 105–146 are disordered; it reads SKLRVKPERSQSTTSDVPANYKVIKSSSDAQLSRNSSDTCLR. Positions 129–146 are enriched in polar residues; that stretch reads KSSSDAQLSRNSSDTCLR. Residue Ser-154 is modified to Phosphoserine. The Rab-GAP TBC domain occupies 210 to 434; sequence GVPREVRPIT…RLWDTYQSEP (225 aa).

As to quaternary structure, interacts with ACBD3 and ARFGEF1. Interacts with YWHAB, YWHAE, YWHAG, YWHAH, YWHAQ and YWHAZ.

Functionally, may act as a GTPase-activating protein for Rab family protein(s). The chain is TBC1 domain family member 22B (TBC1D22B) from Homo sapiens (Human).